Here is a 311-residue protein sequence, read N- to C-terminus: Olfactory receptor 4K1 (311 aa).

Over Met-1–Leu-25 the chain is Extracellular. A glycan (N-linked (GlcNAc...) asparagine) is linked at Asn-5. A helical transmembrane segment spans residues Phe-26 to Ile-49. Topologically, residues Ser-50–Ser-57 are cytoplasmic. The helical transmembrane segment at Pro-58–Pro-79 threads the bilayer. Over Lys-80–Gln-100 the chain is Extracellular. A disulfide bridge connects residues Cys-97 and Cys-189. A helical transmembrane segment spans residues Ile-101–Tyr-120. Over Asp-121 to Arg-139 the chain is Cytoplasmic. Residues Leu-140–Ser-158 traverse the membrane as a helical segment. The Extracellular segment spans residues His-159–Met-195. The chain crosses the membrane as a helical span at residues Glu-196–Thr-219. The Cytoplasmic portion of the chain corresponds to Ile-220–Lys-235. Residues Ala-236–Tyr-258 traverse the membrane as a helical segment. Residues Ile-259 to Lys-269 lie on the Extracellular side of the membrane. Residues Phe-270–Leu-289 traverse the membrane as a helical segment. Residues Arg-290 to Asn-311 are Cytoplasmic-facing.

It belongs to the G-protein coupled receptor 1 family.

It localises to the cell membrane. Odorant receptor. The polypeptide is Olfactory receptor 4K1 (OR4K1) (Homo sapiens (Human)).